We begin with the raw amino-acid sequence, 444 residues long: tRNA modification GTPase MnmE (444 aa).

The (6S)-5-formyl-5,6,7,8-tetrahydrofolate site is built by R23, E82, and K121. One can recognise a TrmE-type G domain in the interval 216-365; it reads GTSIVLAGLP…LKQALQKWLN (150 aa). N226 is a binding site for K(+). Residues 226–231, 245–251, and 270–273 contribute to the GTP site; these read NAGKSS, TDIPGTT, and DSAG. S230 provides a ligand contact to Mg(2+). Positions 245, 247, and 250 each coordinate K(+). Residue T251 participates in Mg(2+) binding. Residue K444 participates in (6S)-5-formyl-5,6,7,8-tetrahydrofolate binding.

The protein belongs to the TRAFAC class TrmE-Era-EngA-EngB-Septin-like GTPase superfamily. TrmE GTPase family. Homodimer. Heterotetramer of two MnmE and two MnmG subunits. It depends on K(+) as a cofactor.

Its subcellular location is the cytoplasm. Exhibits a very high intrinsic GTPase hydrolysis rate. Involved in the addition of a carboxymethylaminomethyl (cmnm) group at the wobble position (U34) of certain tRNAs, forming tRNA-cmnm(5)s(2)U34. In Chlamydia trachomatis serovar L2 (strain ATCC VR-902B / DSM 19102 / 434/Bu), this protein is tRNA modification GTPase MnmE.